Consider the following 446-residue polypeptide: Ribosomal protein uS12 methylthiotransferase RimO (446 aa).

In terms of domain architecture, MTTase N-terminal spans 6-116; sequence PNIGFISLGC…VMQQVHKYVP (111 aa). Residues cysteine 15, cysteine 51, cysteine 80, cysteine 148, cysteine 152, and cysteine 155 each contribute to the [4Fe-4S] cluster site. One can recognise a Radical SAM core domain in the interval 134–375; that stretch reads LTPKHYAYLK…MQLQQEISAA (242 aa). The TRAM domain occupies 378-446; sequence QQKVGKVFTV…AYDLYASLIN (69 aa).

Belongs to the methylthiotransferase family. RimO subfamily. [4Fe-4S] cluster serves as cofactor.

Its subcellular location is the cytoplasm. It carries out the reaction L-aspartate(89)-[ribosomal protein uS12]-hydrogen + (sulfur carrier)-SH + AH2 + 2 S-adenosyl-L-methionine = 3-methylsulfanyl-L-aspartate(89)-[ribosomal protein uS12]-hydrogen + (sulfur carrier)-H + 5'-deoxyadenosine + L-methionine + A + S-adenosyl-L-homocysteine + 2 H(+). Catalyzes the methylthiolation of an aspartic acid residue of ribosomal protein uS12. The sequence is that of Ribosomal protein uS12 methylthiotransferase RimO from Pasteurella multocida (strain Pm70).